The primary structure comprises 142 residues: Deoxyuridine 5'-triphosphate nucleotidohydrolase (142 aa).

Substrate is bound by residues 62–64 (RSG), N75, and 79–81 (TID).

Belongs to the dUTPase family. Mg(2+) is required as a cofactor.

It carries out the reaction dUTP + H2O = dUMP + diphosphate + H(+). The protein operates within pyrimidine metabolism; dUMP biosynthesis; dUMP from dCTP (dUTP route): step 2/2. This enzyme is involved in nucleotide metabolism: it produces dUMP, the immediate precursor of thymidine nucleotides and it decreases the intracellular concentration of dUTP so that uracil cannot be incorporated into DNA. This Clostridium novyi (strain NT) protein is Deoxyuridine 5'-triphosphate nucleotidohydrolase.